A 69-amino-acid chain; its full sequence is Large ribosomal subunit protein uL29 (69 aa).

The protein belongs to the universal ribosomal protein uL29 family.

This is Large ribosomal subunit protein uL29 from Oenococcus oeni (strain ATCC BAA-331 / PSU-1).